The sequence spans 461 residues: Ribulose bisphosphate carboxylase (461 aa).

N113 contacts substrate. K168 serves as the catalytic Proton acceptor. Position 170 (K170) interacts with substrate. The Mg(2+) site is built by K193, D195, and E196. An N6-carboxylysine modification is found at K193. H289 functions as the Proton acceptor in the catalytic mechanism. Residues R290, H323, and S370 each contribute to the substrate site.

This sequence belongs to the RuBisCO large chain family. Type II subfamily. Homodimer. Mg(2+) serves as cofactor.

It carries out the reaction 2 (2R)-3-phosphoglycerate + 2 H(+) = D-ribulose 1,5-bisphosphate + CO2 + H2O. The catalysed reaction is D-ribulose 1,5-bisphosphate + O2 = 2-phosphoglycolate + (2R)-3-phosphoglycerate + 2 H(+). RuBisCO catalyzes two reactions: the carboxylation of D-ribulose 1,5-bisphosphate, the primary event in carbon dioxide fixation, as well as the oxidative fragmentation of the pentose substrate. Both reactions occur simultaneously and in competition at the same active site. In Thiomonas intermedia (strain K12) (Thiobacillus intermedius), this protein is Ribulose bisphosphate carboxylase.